The chain runs to 626 residues: DNA mismatch repair protein MutL (626 aa).

The disordered stretch occupies residues 377 to 413 (EEPQAVKQPTQLWQPSTKPIIEEPIQEEKSWDSNEEG). A compositionally biased stretch (polar residues) spans 383–393 (KQPTQLWQPST).

The protein belongs to the DNA mismatch repair MutL/HexB family.

Functionally, this protein is involved in the repair of mismatches in DNA. It is required for dam-dependent methyl-directed DNA mismatch repair. May act as a 'molecular matchmaker', a protein that promotes the formation of a stable complex between two or more DNA-binding proteins in an ATP-dependent manner without itself being part of a final effector complex. This Bacillus anthracis (strain A0248) protein is DNA mismatch repair protein MutL.